A 71-amino-acid chain; its full sequence is Metallothionein-like protein 1 (71 aa).

This sequence belongs to the metallothionein superfamily. Type 15 family.

Metallothioneins have a high content of cysteine residues that bind various heavy metals. The protein is Metallothionein-like protein 1 (MT1) of Casuarina glauca (Swamp oak).